The following is a 427-amino-acid chain: Enolase (427 aa).

Gln163 contacts (2R)-2-phosphoglycerate. Glu205 acts as the Proton donor in catalysis. 3 residues coordinate Mg(2+): Asp242, Glu285, and Asp312. Positions 337, 366, 367, and 388 each coordinate (2R)-2-phosphoglycerate. Lys337 (proton acceptor) is an active-site residue.

It belongs to the enolase family. The cofactor is Mg(2+).

It is found in the cytoplasm. The protein resides in the secreted. The protein localises to the cell surface. It catalyses the reaction (2R)-2-phosphoglycerate = phosphoenolpyruvate + H2O. It participates in carbohydrate degradation; glycolysis; pyruvate from D-glyceraldehyde 3-phosphate: step 4/5. Catalyzes the reversible conversion of 2-phosphoglycerate (2-PG) into phosphoenolpyruvate (PEP). It is essential for the degradation of carbohydrates via glycolysis. This chain is Enolase, found in Paraburkholderia phymatum (strain DSM 17167 / CIP 108236 / LMG 21445 / STM815) (Burkholderia phymatum).